The following is a 398-amino-acid chain: S-adenosylmethionine decarboxylase proenzyme (398 aa).

Catalysis depends on residues glutamate 18 and glutamate 21. Serine 78 functions as the Schiff-base intermediate with substrate; via pyruvic acid in the catalytic mechanism. The residue at position 78 (serine 78) is a Pyruvic acid (Ser); by autocatalysis. The active-site Proton donor; for catalytic activity is cysteine 92. Catalysis depends on proton acceptor; for processing activity residues serine 243 and histidine 256.

The protein belongs to the eukaryotic AdoMetDC family. Pyruvate is required as a cofactor. Post-translationally, is synthesized initially as an inactive proenzyme. Formation of the active enzyme involves a self-maturation process in which the active site pyruvoyl group is generated from an internal serine residue via an autocatalytic post-translational modification. Two non-identical subunits are generated from the proenzyme in this reaction, and the pyruvate is formed at the N-terminus of the alpha chain, which is derived from the carboxyl end of the proenzyme. The post-translation cleavage follows an unusual pathway, termed non-hydrolytic serinolysis, in which the side chain hydroxyl group of the serine supplies its oxygen atom to form the C-terminus of the beta chain, while the remainder of the serine residue undergoes an oxidative deamination to produce ammonia and the pyruvoyl group blocking the N-terminus of the alpha chain.

It catalyses the reaction S-adenosyl-L-methionine + H(+) = S-adenosyl 3-(methylsulfanyl)propylamine + CO2. Its pathway is amine and polyamine biosynthesis; S-adenosylmethioninamine biosynthesis; S-adenosylmethioninamine from S-adenosyl-L-methionine: step 1/1. In Oryza sativa subsp. japonica (Rice), this protein is S-adenosylmethionine decarboxylase proenzyme (SAMDC).